The following is a 130-amino-acid chain: Small ribosomal subunit protein uS9 (130 aa).

The protein belongs to the universal ribosomal protein uS9 family.

The sequence is that of Small ribosomal subunit protein uS9 from Shewanella amazonensis (strain ATCC BAA-1098 / SB2B).